Here is an 818-residue protein sequence, read N- to C-terminus: H(+)/Cl(-) exchange transporter 3 (818 aa).

The Cytoplasmic portion of the chain corresponds to M1–A125. Short sequence motifs (di-leucine internalization motif; mediates targeting to late endosome and lysosome membranes) lie at residues L28–L29, L46–L47, and L71–L75. Residues W126 to S163 traverse the membrane as a helical segment. N177 carries an N-linked (GlcNAc...) asparagine glycan. Residues M209–F232 form a helical membrane-spanning segment. The Selectivity filter part_1 motif lies at G238–P242. S239 is a chloride binding site. Residues I241 to L248 constitute an intramembrane region (helical). 2 helical membrane passes run G258–G276 and E282–P301. The Selectivity filter part_2 motif lies at G280–P284. 2 intramembrane regions (helical) span residues V313 to A325 and P329 to L337. The next 3 helical transmembrane spans lie at L349–N367, F391–R416, and F423–F443. N-linked (GlcNAc...) asparagine glycosylation is found at N451 and N479. Helical transmembrane passes span I500–I520 and G525–A544. Positions G525–P529 match the Selectivity filter part_3 motif. F527 is a binding site for chloride. 2 intramembrane regions (helical) span residues G572–V586 and T590–T601. An intramembrane region (note=Loop between two helices) is located at residues G602–E605. The chain crosses the membrane as a helical span at residues Y606–F624. Residues G625 to N818 are Cytoplasmic-facing. Y630 lines the chloride pocket. 2 CBS domains span residues M658–K722 and L755–P812. ATP is bound by residues Y689–G691 and T796–D799.

The protein belongs to the chloride channel (TC 2.A.49) family. ClC-3/CLCN3 subfamily. As to quaternary structure, monomer and homodimer. Forms heterodimers with CLCN4. Post-translationally, N-glycosylated. In terms of tissue distribution, abundant in brain, especially in the olfactory bulb, hippocampus, and cerebellum. A moderate expression is seen in the lung, kidney and adrenal gland.

Its subcellular location is the lysosome membrane. It localises to the late endosome membrane. The protein localises to the cell membrane. It is found in the early endosome membrane. Strongly outwardly rectifying, electrogenic H(+)/Cl(-)exchanger which mediates the exchange of chloride ions against protons. The CLC channel family contains both chloride channels and proton-coupled anion transporters that exchange chloride or another anion for protons. The presence of conserved gating glutamate residues is typical for family members that function as antiporters. Functionally, strongly outwardly rectifying, electrogenic H(+)/Cl(-)exchanger which mediates the exchange of chloride ions against protons. May play an important role in neuronal cell function through regulation of membrane excitability by protein kinase C. It could help neuronal cells to establish short-term memory. The sequence is that of H(+)/Cl(-) exchange transporter 3 (Clcn3) from Rattus norvegicus (Rat).